Consider the following 152-residue polypeptide: SMN complex subunit smn1 (152 aa).

The tract at residues Lys26–Ser51 is interacts with yip11/gem2. A disordered region spans residues Asp88–Glu110. A compositionally biased stretch (basic and acidic residues) spans Gly91 to Phe108. The may interact with gem8 stretch occupies residues Ser130–Asp152.

The protein belongs to the SMN family. In terms of assembly, homooligomer; may form homodimers and homotetramers. Part of the core SMN complex at least composed of smn1, yip11/gem2, gem6, gem7 and gem8. Part of the SMN-Sm complex. Interacts with yip11/gem2; the interaction is direct. Interacts with gem8; the interaction is direct. Interacts with proteins of the Sm complex, including smn1, smb1, smd1, smd2 and smd3.

The protein localises to the nucleus. In terms of biological role, the SMN complex catalyzes the assembly of small nuclear ribonucleoproteins (snRNPs), the building blocks of the spliceosome, and thereby plays an important role in the splicing of cellular pre-mRNAs. Most spliceosomal snRNPs contain a common set of Sm proteins smb1, smd1, smd2, smd3, sme1, smf1 and smg1 that assemble in a heptameric protein ring on the Sm site of the small nuclear RNA to form the core snRNP (Sm core). In the cytosol, the Sm proteins smd1, smd2, sme1, smf1 and smg1 (5Sm) are trapped in an inactive 6S pICln-Sm complex by the chaperone saf5 that controls the assembly of the core snRNP. To assemble core snRNPs, the SMN complex accepts the trapped 5Sm proteins from saf5 forming an intermediate. Binding of snRNA inside 5Sm triggers eviction of the SMN complex, thereby allowing binding of smd3 and smb1 to complete assembly of the core snRNP. Within the SMN complex, smn1 acts as a structural backbone and together with yip11/gem2 it gathers the Sm complex subunits. This chain is SMN complex subunit smn1, found in Schizosaccharomyces pombe (strain 972 / ATCC 24843) (Fission yeast).